Consider the following 439-residue polypeptide: Maintenance of mitochondrial morphology protein 1 (439 aa).

Residues 1-76 (MSQDLIETTA…NGNTWSFTQG (76 aa)) are Lumenal-facing. A helical membrane pass occupies residues 77-97 (LVIGQVSVIFIIIVFVKFFVF). Over 98 to 439 (ADSSSHIPTK…TPGEYVNSNI (342 aa)) the chain is Cytoplasmic. Disordered stretches follow at residues 125–145 (KHSN…SLDS), 309–336 (MNGY…DGGT), and 405–425 (REPV…GTSA). Positions 165 to 395 (ASESLDWFNV…EPRFQVVRLP (231 aa)) constitute an SMP-LTD domain. 2 stretches are compositionally biased toward low complexity: residues 315 to 326 (ENANGDGASSSN) and 410 to 424 (KKTT…NGTS).

This sequence belongs to the MMM1 family. Homodimer. Component of the ER-mitochondria encounter structure (ERMES) or MDM complex, composed of MMM1, MDM10, MDM12 and MDM34. An MMM1 homodimer associates with one molecule of MDM12 on each side in a pairwise head-to-tail manner, and the SMP-LTD domains of MMM1 and MDM12 generate a continuous hydrophobic tunnel for phospholipid trafficking.

The protein localises to the endoplasmic reticulum membrane. In terms of biological role, component of the ERMES/MDM complex, which serves as a molecular tether to connect the endoplasmic reticulum (ER) and mitochondria. Components of this complex are involved in the control of mitochondrial shape and protein biogenesis, and function in nonvesicular lipid trafficking between the ER and mitochondria. The MDM12-MMM1 subcomplex functions in the major beta-barrel assembly pathway that is responsible for biogenesis of all outer membrane beta-barrel proteins, and acts in a late step after the SAM complex. The MDM10-MDM12-MMM1 subcomplex further acts in the TOM40-specific pathway after the action of the MDM12-MMM1 complex. Essential for establishing and maintaining the structure of mitochondria and maintenance of mtDNA nucleoids. This is Maintenance of mitochondrial morphology protein 1 from Candida albicans (strain WO-1) (Yeast).